The primary structure comprises 672 residues: Spermatid perinuclear RNA-binding protein (672 aa).

The region spanning Arg5–Leu363 is the DZF domain. Positions Gly349–Lys371 are disordered. Residues Arg357–Lys371 show a composition bias toward basic and acidic residues. A DRBM 1 domain is found at Asp387–Tyr453. Positions Asp467–Asn476 are enriched in basic and acidic residues. Residues Asp467–Pro514 form a disordered region. Low complexity predominate over residues Asp477–Thr497. Positions Ser510–Ser576 constitute a DRBM 2 domain. Asymmetric dimethylarginine occurs at positions 612 and 617.

In terms of assembly, interacts with EIF2AK2. Associates with microtubules; it is unsure whether such interaction is direct or indirect. In terms of tissue distribution, isoform 2 is expressed in spermatocytes (at protein level). Expressed in testis, thymus, ovary, liver, kidney, heart, spleen and brain. Expressed in cortex, dentate gyrus and Purkinje cell layer and granule cells of the cerebellum.

Its subcellular location is the cytoplasm. The protein localises to the cytoskeleton. Functionally, involved in spermatogenesis and sperm function. Plays a role in regulation of cell growth. Binds to double-stranded DNA and RNA. Binds most efficiently to poly(I:C) RNA than to poly(dI:dC) DNA. Also binds to single-stranded poly(G) RNA. Binds non-specifically to the mRNA PRM1 3'-UTR and adenovirus VA RNA. This is Spermatid perinuclear RNA-binding protein (Strbp) from Mus musculus (Mouse).